The sequence spans 37 residues: Small ribosomal subunit protein uS19 (37 aa).

This sequence belongs to the universal ribosomal protein uS19 family.

The sequence is that of Small ribosomal subunit protein uS19 (RPS15) from Helix lucorum (Snail).